The chain runs to 396 residues: Smad nuclear-interacting protein 1 (396 aa).

Over residues 1-10 the composition is skewed to basic and acidic residues; that stretch reads MKAVKSERER. The disordered stretch occupies residues 1–227; it reads MKAVKSERER…VPAKEKPSFE (227 aa). A Glycyl lysine isopeptide (Lys-Gly) (interchain with G-Cter in SUMO); alternate cross-link involves residue Lys30. Lys30 participates in a covalent cross-link: Glycyl lysine isopeptide (Lys-Gly) (interchain with G-Cter in SUMO1); alternate. Lys30 participates in a covalent cross-link: Glycyl lysine isopeptide (Lys-Gly) (interchain with G-Cter in SUMO2); alternate. Residues Ser35, Ser49, Ser52, and Ser54 each carry the phosphoserine modification. At Thr57 the chain carries Phosphothreonine. A phosphoserine mark is found at Ser58 and Ser99. A compositionally biased stretch (basic residues) spans 77-105; it reads PPKKKNKASGRRSKSPRSKRNRSPHHSTV. Over residues 107–142 the composition is skewed to basic and acidic residues; the sequence is VKQEREDHPRRGREDRQHREPSEQEHRRARNSDRDR. Lys108 participates in a covalent cross-link: Glycyl lysine isopeptide (Lys-Gly) (interchain with G-Cter in SUMO2). Ser153 carries the post-translational modification Phosphoserine. Positions 165 to 196 form a coiled coil; it reads RDRDTQNLQAQEEEREFYNARRREHRQRNDVG. Ser202 is subject to Phosphoserine. Residues 213 to 225 are compositionally biased toward basic and acidic residues; it reads NKEKEVPAKEKPS. Lys223 is covalently cross-linked (Glycyl lysine isopeptide (Lys-Gly) (interchain with G-Cter in SUMO2)). The FHA domain occupies 281–344; the sequence is YLLGRHRRIA…NGTFLNNKRI (64 aa). The span at 373–382 shows a compositional bias: basic and acidic residues; sequence SSDTSEIDRK. The disordered stretch occupies residues 373–396; the sequence is SSDTSEIDRKDDEDEEEEEEVSDS. Over residues 383–396 the composition is skewed to acidic residues; sequence DDEDEEEEEEVSDS. Ser394 is subject to Phosphoserine.

Component of activated spliceosome complexes. Component of the minor spliceosome, which splices U12-type introns. Binds SMAD4 and CREBBP/EP300. Binds the SMAD1/OAZ1/PSMB4 complex. Interacts with DROSHA and SMARCA4. Component of the SNARP complex which consists at least of SNIP1, SNW1, THRAP3, BCLAF1 and PNN. Degraded by the proteasome upon binding to the SMAD1/OAZ1/PSMB4 complex. As to expression, ubiquitous, with highest expression in heart and skeletal muscle.

It is found in the nucleus. In terms of biological role, required for pre-mRNA splicing as component of the spliceosome. As a component of the minor spliceosome, involved in the splicing of U12-type introns in pre-mRNAs. Down-regulates NF-kappa-B signaling by competing with RELA for CREBBP/EP300 binding. Involved in the microRNA (miRNA) biogenesis. May be involved in cyclin-D1/CCND1 mRNA stability through the SNARP complex which associates with both the 3'end of the CCND1 gene and its mRNA. The chain is Smad nuclear-interacting protein 1 (SNIP1) from Homo sapiens (Human).